The sequence spans 1274 residues: DENN domain-containing protein 5B (1274 aa).

Ser-2 carries the post-translational modification N-acetylserine. The 206-residue stretch at 39-244 (DELAGENFDQ…EVPLPPPGRS (206 aa)) folds into the uDENN domain. Phosphoserine is present on residues Ser-49 and Ser-178. A cDENN domain is found at 263 to 399 (ELPLSDYPLR…VDFIQELSEV (137 aa)). Positions 401–581 (LQFGIPPEGS…DNKIMSQWEE (181 aa)) constitute a dDENN domain. The region spanning 772–932 (LEENTLIASL…DYFCFTSVFT (161 aa)) is the RUN 1 domain. A Phosphoserine modification is found at Ser-822. Residues 916 to 936 (LLSLNAVDYFCFTSVFTTIMI) traverse the membrane as a helical segment. The 109-residue stretch at 936–1044 (IPYRSVIIPI…DDGSLERILI (109 aa)) folds into the PLAT domain. Residue Thr-1062 is modified to Phosphothreonine. A phosphoserine mark is found at Ser-1068, Ser-1076, and Ser-1079. In terms of domain architecture, RUN 2 spans 1118 to 1267 (TVLLCGENGL…QDFTIVLEGS (150 aa)).

It belongs to the RAB6IP1 family.

The protein localises to the membrane. In terms of biological role, guanine nucleotide exchange factor (GEF) which may activate RAB39A and/or RAB39B. Promotes the exchange of GDP to GTP, converting inactive GDP-bound Rab proteins into their active GTP-bound form. The sequence is that of DENN domain-containing protein 5B (Dennd5b) from Mus musculus (Mouse).